The primary structure comprises 1836 residues: Sodium channel protein type 4 subunit alpha (1836 aa).

Topologically, residues 1-131 (MARPSLCTLV…RGAIKVLIHA (131 aa)) are cytoplasmic. Over residues 39–60 (LQRNKQMEIEEPERKPRSDLEA) the composition is skewed to basic and acidic residues. A disordered region spans residues 39–63 (LQRNKQMEIEEPERKPRSDLEAGKN). An I repeat occupies 113–454 (LLSPFSVVRR…VVAMAYAEQN (342 aa)). A helical membrane pass occupies residues 132–150 (LFSMFIMITILTNCVFMTM). At 151–157 (SDPPPWS) the chain is on the extracellular side. The chain crosses the membrane as a helical span at residues 158 to 178 (KNVEYTFTGIYTFESLIKILA). At 179 to 192 (RGFCVDDFTFLRDP) the chain is on the cytoplasmic side. A helical transmembrane segment spans residues 193–210 (WNWLDFSVIMMAYLTEFV). The Extracellular portion of the chain corresponds to 211-216 (DLGNIS). The N-linked (GlcNAc...) asparagine glycan is linked to asparagine 214. The helical transmembrane segment at 217-233 (ALRTFRVLRALKTITVI) threads the bilayer. Residues 234-252 (PGLKTIVGALIQSVKKLSD) are Cytoplasmic-facing. A helical transmembrane segment spans residues 253–272 (VMILTVFCLSVFALVGLQLF). At 273–391 (MGNLRQKCVR…PNYGYTSYDT (119 aa)) the chain is on the extracellular side. Residues cysteine 280 and cysteine 360 are joined by a disulfide bond. N-linked (GlcNAc...) asparagine glycosylation is found at asparagine 288, asparagine 291, asparagine 297, asparagine 303, asparagine 315, asparagine 321, asparagine 333, and asparagine 362. Cysteines 369 and 375 form a disulfide. Residues 392-416 (FSWAFLALFRLMTQDYWENLFQLTL) constitute an intramembrane region (pore-forming). At 417–423 (RAAGKTY) the chain is on the extracellular side. The chain crosses the membrane as a helical span at residues 424–444 (MIFFVVIIFLGSFYLINLILA). Topologically, residues 445-578 (VVAMAYAEQN…NIIHLIVMDP (134 aa)) are cytoplasmic. Residues 493 to 530 (GGEADGDPAHGKDCNGSLDTSQGEKGAPRQSSSGDSGI) are disordered. Polar residues predominate over residues 509-528 (SLDTSQGEKGAPRQSSSGDS). The stretch at 560-832 (CCAPWLKFKN…QIAIGRIKLG (273 aa)) is one II repeat. Residues 579 to 597 (FVDLGITICIVLNTLFMAM) traverse the membrane as a helical segment. At 598–608 (EHYPMTEHFDN) the chain is on the extracellular side. A helical membrane pass occupies residues 609–628 (VLTVGNLVFTGIFTAEMVLK). At 629 to 642 (LIAMDPYEYFQQGW) the chain is on the cytoplasmic side. The chain crosses the membrane as a helical span at residues 643–662 (NIFDSIIVTLSLVELGLANV). Topologically, residues 663-664 (QG) are extracellular. A helical transmembrane segment spans residues 665–682 (LSVLRSFRLLRVFKLAKS). Over 683–698 (WPTLNMLIKIIGNSVG) the chain is Cytoplasmic. Residues 699-717 (ALGNLTLVLAIIVFIFAVV) traverse the membrane as a helical segment. Over 718–746 (GMQLFGKSYKECVCKIALDCNLPRWHMHD) the chain is Extracellular. Cysteine 731 and cysteine 737 are oxidised to a cystine. Positions 747-767 (FFHSFLIVFRILCGEWIETMW) form an intramembrane region, pore-forming. Topologically, residues 768–778 (DCMEVAGQAMC) are extracellular. Cysteine 769 and cysteine 778 are oxidised to a cystine. The chain crosses the membrane as a helical span at residues 779-797 (LTVFLMVMVIGNLVVLNLF). Residues 798-1032 (LALLLSSFSA…ACFKIVEHNW (235 aa)) are Cytoplasmic-facing. 2 disordered regions span residues 863–885 (GAGE…PPEE) and 930–992 (ESDL…QPEE). The span at 876–885 (EDEKKEPPEE) shows a compositional bias: basic and acidic residues. Acidic residues-rich tracts occupy residues 930–947 (ESDL…FSEP) and 975–992 (EDPE…QPEE). One copy of the III repeat lies at 1013 to 1326 (RGKKWWTLRR…KKYYNAMKKL (314 aa)). Residues 1033-1050 (FETFIVFMILLSSGALAF) traverse the membrane as a helical segment. Topologically, residues 1051–1063 (EDIYIEQRRVIRT) are extracellular. A helical transmembrane segment spans residues 1064-1082 (ILEYADKVFTYIFIMEMLL). The Cytoplasmic portion of the chain corresponds to 1083–1096 (KWVAYGFKVYFTNA). The chain crosses the membrane as a helical span at residues 1097–1115 (WCWLDFLIVDVSIISLVAN). Residues 1116-1123 (WLGYSELG) lie on the Extracellular side of the membrane. A helical membrane pass occupies residues 1124 to 1142 (PIKSLRTLRALRPLRALSR). At 1143–1159 (FEGMRVVVNALLGAIPS) the chain is on the cytoplasmic side. The helical transmembrane segment at 1160-1179 (IMNVLLVCLIFWLIFSIMGV) threads the bilayer. Residues 1180 to 1230 (NLFAGKFYYCINTTTSERFDISEVNNKSECESLMHTGQVRWLNVKVNYDNV) are Extracellular-facing. The cysteines at positions 1189 and 1209 are disulfide-linked. 2 N-linked (GlcNAc...) asparagine glycosylation sites follow: asparagine 1191 and asparagine 1205. Positions 1231–1252 (GLGYLSLLQVATFKGWMDIMYA) form an intramembrane region, pore-forming. The Extracellular portion of the chain corresponds to 1253 to 1269 (AVDSREKEEQPQYEVNL). Residues 1270-1291 (YMYLYFVIFIIFGSFFTLNLFI) form a helical membrane-spanning segment. Over 1292–1354 (GVIIDNFNQQ…MVYDLVTKQA (63 aa)) the chain is Cytoplasmic. Positions 1310 to 1312 (IFM) are important for rapid channel inactivation. The IV repeat unit spans residues 1335–1633 (IPRPQNKIQG…WEKFDPDATQ (299 aa)). A helical membrane pass occupies residues 1355-1372 (FDITIMILICLNMVTMMV). The Extracellular portion of the chain corresponds to 1373–1383 (ETDNQSQLKVD). Residues 1384–1402 (ILYNINMIFIIIFTGECVL) form a helical membrane-spanning segment. At 1403 to 1414 (KMLALRQYYFTV) the chain is on the cytoplasmic side. Residues 1415–1432 (GWNIFDFVVVILSIVGLA) traverse the membrane as a helical segment. Topologically, residues 1433–1445 (LSDLIQKYFVSPT) are extracellular. A helical transmembrane segment spans residues 1446 to 1462 (LFRVIRLARIGRVLRLI). The Cytoplasmic segment spans residues 1463–1481 (RGAKGIRTLLFALMMSLPA). Residues 1482–1499 (LFNIGLLLFLVMFIYSIF) form a helical membrane-spanning segment. Topologically, residues 1500–1521 (GMSNFAYVKKESGIDDMFNFET) are extracellular. The segment at residues 1522 to 1544 (FGNSIICLFEITTSAGWDGLLNP) is an intramembrane region (pore-forming). The Extracellular segment spans residues 1545 to 1574 (ILNSGPPDCDPNLENPGTSVKGDCGNPSIG). Cysteine 1553 and cysteine 1568 are joined by a disulfide. The chain crosses the membrane as a helical span at residues 1575–1597 (ICFFCSYIIISFLIVVNMYIAII). Residues 1598–1836 (LENFNVATEE…VRPGVKESLV (239 aa)) lie on the Cytoplasmic side of the membrane. The IQ domain maps to 1727 to 1756 (EEVCAIKIQRAYRRHLLQRSMKQASYMYRH). The disordered stretch occupies residues 1778-1836 (KMYGHENGNSSSPSPEEKGEAGDAGPTMGLMPISPSDTAWPPAPPPGQTVRPGVKESLV).

Belongs to the sodium channel (TC 1.A.1.10) family. Nav1.4/SCN4A subfamily. As to quaternary structure, the Nav1.4 voltage-gated sodium channel consists of an ion-conducting alpha subunit SCN4A which is functional on its own and a regulatory beta subunit SCN1B. SCN1B strongly enhances the presence of SCN4A at the cell surface. SCN1B is also required for rapid channel inactivation and recovery after inactivation. It prevents the decrease of channel activity in response to repetitive, high-frequency depolarizations. Interacts with the syntrophins SNTA1, SNTB1 and SNTB2 (via PDZ domain); probably links SCN4A to the actin cytoskeleton and the extracellular matrix via the dystrophin-associated protein complex and regulates its localization in muscle cells. Interacts with TMEM233; probable regulator of the channel.

The protein resides in the cell membrane. The enzyme catalyses Na(+)(in) = Na(+)(out). Its activity is regulated as follows. The channel is inhibited by tetrodotoxin and saxitoxin. Inhibited by the conotoxin GVIIJ. Pore-forming subunit of Nav1.4, a voltage-gated sodium (Nav) channel that directly mediates the depolarizing phase of action potentials in excitable membranes. Navs, also called VGSCs (voltage-gated sodium channels) or VDSCs (voltage-dependent sodium channels), operate by switching between closed and open conformations depending on the voltage difference across the membrane. In the open conformation they allow Na(+) ions to selectively pass through the pore, along their electrochemical gradient. The influx of Na+ ions provokes membrane depolarization, initiating the propagation of electrical signals throughout cells and tissues. Highly expressed in skeletal muscles, Nav1.4 generates the action potential crucial for muscle contraction. This chain is Sodium channel protein type 4 subunit alpha, found in Homo sapiens (Human).